Reading from the N-terminus, the 303-residue chain is Glutathione transport system permease protein GsiD (303 aa).

The next 6 helical transmembrane spans lie at 40 to 60, 105 to 125, 144 to 164, 165 to 185, 222 to 242, and 266 to 286; these read AMTA…ARWI, LAAG…LGLL, LFAF…GSGI, ANVI…LVRG, IVVF…SLSF, and VIAP…VLAF. Residues 101–290 form the ABC transmembrane type-1 domain; the sequence is AQISLAAGVF…LTVLAFNLLG (190 aa).

This sequence belongs to the binding-protein-dependent transport system permease family. As to quaternary structure, the complex is composed of two ATP-binding proteins (GsiA), two transmembrane proteins (GsiC and GsiD) and a solute-binding protein (GsiB).

The protein localises to the cell inner membrane. In terms of biological role, part of the ABC transporter complex GsiABCD involved in glutathione import. Probably responsible for the translocation of the substrate across the membrane. This is Glutathione transport system permease protein GsiD from Escherichia coli O6:K15:H31 (strain 536 / UPEC).